Consider the following 89-residue polypeptide: Probable oxaloacetate decarboxylase gamma chain (89 aa).

A helical membrane pass occupies residues 13-33 (LMLSGMGFVITFLLILIWAIT).

The protein belongs to the OadG family. Heterotrimer of an alpha, a beta and a gamma subunit. Requires Na(+) as cofactor.

The protein localises to the cell membrane. It carries out the reaction oxaloacetate + 2 Na(+)(in) + H(+) = pyruvate + 2 Na(+)(out) + CO2. Functionally, catalyzes the decarboxylation of oxaloacetate coupled to Na(+) translocation. This chain is Probable oxaloacetate decarboxylase gamma chain, found in Actinobacillus succinogenes (strain ATCC 55618 / DSM 22257 / CCUG 43843 / 130Z).